We begin with the raw amino-acid sequence, 251 residues long: MHKVVLLRHGESLWNMENRFTGWTDVDLSPKGIEEARESGKTLKAEGYTFDCAFTSVLKRAIRTLWIVLDELDRMWIPVYKSWRLNERHYGALQGLNKAETAKKYGEEQVKIWRRSADVRPPALEKDDPRYPGFDPRYADLSEEEIPLTENLIDTINRVIPYWESTIAPTIKSGKKVLIVAHGNSLRGLVKYLDNLSKQEIMELNIPTGIPLVYELDDDLKPIRHYYLADEEKVKEKKELVENQGKIQGNS.

Substrate contacts are provided by residues 8-15, 21-22, Arg-60, 87-90, Lys-98, 114-115, and 183-184; these read RHGESLWN, TG, ERHY, RR, and GN. Catalysis depends on His-9, which acts as the Tele-phosphohistidine intermediate. The active-site Proton donor/acceptor is Glu-87.

The protein belongs to the phosphoglycerate mutase family. BPG-dependent PGAM subfamily.

It catalyses the reaction (2R)-2-phosphoglycerate = (2R)-3-phosphoglycerate. Its pathway is carbohydrate degradation; glycolysis; pyruvate from D-glyceraldehyde 3-phosphate: step 3/5. Functionally, catalyzes the interconversion of 2-phosphoglycerate and 3-phosphoglycerate. The polypeptide is 2,3-bisphosphoglycerate-dependent phosphoglycerate mutase (Thermoanaerobacter sp. (strain X514)).